A 673-amino-acid polypeptide reads, in one-letter code: Acetoacetyl-CoA synthetase (673 aa).

Belongs to the ATP-dependent AMP-binding enzyme family.

Its subcellular location is the cytoplasm. The protein resides in the cytosol. The enzyme catalyses acetoacetate + ATP + CoA = acetoacetyl-CoA + AMP + diphosphate. In terms of biological role, converts acetoacetate to acetoacetyl-CoA in the cytosol. Ketone body-utilizing enzyme, responsible for the synthesis of cholesterol and fatty acids. In Danio rerio (Zebrafish), this protein is Acetoacetyl-CoA synthetase (aacs).